A 132-amino-acid polypeptide reads, in one-letter code: Small ribosomal subunit protein uS8 (132 aa).

Belongs to the universal ribosomal protein uS8 family. In terms of assembly, part of the 30S ribosomal subunit. Contacts proteins S5 and S12.

One of the primary rRNA binding proteins, it binds directly to 16S rRNA central domain where it helps coordinate assembly of the platform of the 30S subunit. This Streptococcus suis (strain 98HAH33) protein is Small ribosomal subunit protein uS8.